Here is a 63-residue protein sequence, read N- to C-terminus: Prokaryotic ubiquitin-like protein Pup 1 (63 aa).

2 stretches are compositionally biased toward basic and acidic residues: residues 1–12 and 24–33; these read MSQEKVQRHGGG and GQERREKLGE. The interval 1-35 is disordered; it reads MSQEKVQRHGGGDGEEESGPEAAGQERREKLGEDV. The interval 20 to 57 is ARC ATPase binding; it reads PEAAGQERREKLGEDVDAILDEIDDVLEENAEDFVRAY. Residues 25 to 51 adopt a coiled-coil conformation; that stretch reads QERREKLGEDVDAILDEIDDVLEENAE. Position 63 is a deamidated glutamine (Gln63). Gln63 participates in a covalent cross-link: Isoglutamyl lysine isopeptide (Gln-Lys) (interchain with K-? in acceptor proteins).

Belongs to the prokaryotic ubiquitin-like protein family. Strongly interacts with the proteasome-associated ATPase ARC through a hydrophobic interface; the interacting region of Pup lies in its C-terminal half. There is one Pup binding site per ARC hexamer ring. In terms of processing, is modified by deamidation of its C-terminal glutamine to glutamate by the deamidase Dop, a prerequisite to the subsequent pupylation process.

The protein operates within protein degradation; proteasomal Pup-dependent pathway. Its function is as follows. Protein modifier that is covalently attached to lysine residues of substrate proteins, thereby targeting them for proteasomal degradation. The tagging system is termed pupylation. This Saccharopolyspora erythraea (strain ATCC 11635 / DSM 40517 / JCM 4748 / NBRC 13426 / NCIMB 8594 / NRRL 2338) protein is Prokaryotic ubiquitin-like protein Pup 1.